The following is a 573-amino-acid chain: Probable D-xylulose kinase A (573 aa).

Positions 97, 168, 284, and 285 each coordinate substrate. ATP is bound by residues Trp366, 471-472 (GG), and Asn475.

This sequence belongs to the FGGY kinase family.

It is found in the cytoplasm. The catalysed reaction is D-xylulose + ATP = D-xylulose 5-phosphate + ADP + H(+). In terms of biological role, highly specific D-xylulose kinase which participates in the catabolism of xylose. Xylose is a major component of hemicelluloses such as xylan. Most fungi utilize D-xylose via three enzymatic reactions, xylose reductase (XR), xylitol dehydrogenase (XDH), and xylulokinase, to form xylulose 5-phosphate, which enters pentose phosphate pathway. This chain is Probable D-xylulose kinase A (xkiA), found in Aspergillus fumigatus (strain ATCC MYA-4609 / CBS 101355 / FGSC A1100 / Af293) (Neosartorya fumigata).